Reading from the N-terminus, the 843-residue chain is Glycogen phosphorylase, brain form (843 aa).

Ala2 carries the N-acetylalanine modification. Ser15 bears the Phosphoserine; by PHK; in form phosphorylase A mark. 3 residues coordinate AMP: Asp43, Tyr197, and Arg310. Phosphotyrosine is present on Tyr197. Tyr473 is subject to Phosphotyrosine. Lys569 is a pyridoxal 5'-phosphate binding site. A pyridoxal 5'-phosphate region spans residues 677–678 (TG). Lys681 carries the N6-(pyridoxal phosphate)lysine modification.

Belongs to the glycogen phosphorylase family. In terms of assembly, homodimer. Dimers associate into a tetramer to form the enzymatically active phosphorylase A. It depends on pyridoxal 5'-phosphate as a cofactor. In terms of processing, phosphorylation of Ser-15 converts phosphorylase B (unphosphorylated) to phosphorylase A.

It carries out the reaction [(1-&gt;4)-alpha-D-glucosyl](n) + phosphate = [(1-&gt;4)-alpha-D-glucosyl](n-1) + alpha-D-glucose 1-phosphate. With respect to regulation, activity of phosphorylase is controlled both by allosteric means (through the non-covalent binding of metabolites) and by covalent modification. Thus AMP allosterically activates, whereas ATP, ADP, and glucose-6-phosphate allosterically inhibit, phosphorylase B. Its function is as follows. Glycogen phosphorylase that regulates glycogen mobilization. Phosphorylase is an important allosteric enzyme in carbohydrate metabolism. Enzymes from different sources differ in their regulatory mechanisms and in their natural substrates. However, all known phosphorylases share catalytic and structural properties. This is Glycogen phosphorylase, brain form (PYGB) from Pongo abelii (Sumatran orangutan).